The chain runs to 391 residues: Terminal nucleotidyltransferase 5C (391 aa).

The protein belongs to the TENT family. Interacts with BCCIP and PABPC1; the interaction has no effect on TENT5C poly(A) polymerase function. Interacts with PLK4; this interaction leads to the TENT5C recruitment into the centrosome.

It is found in the nucleus. Its subcellular location is the cytoplasm. The protein resides in the cytoskeleton. The protein localises to the microtubule organizing center. It localises to the centrosome. It carries out the reaction RNA(n) + ATP = RNA(n)-3'-adenine ribonucleotide + diphosphate. Its function is as follows. Catalyzes the transfer of one adenosine molecule from an ATP to an mRNA poly(A) tail bearing a 3'-OH terminal group and enhances mRNA stability and gene expression. Can also elongate RNA oligos ending with uridine molecule, provided that the sequence is adenosine-rich. Mainly targets mRNAs encoding endoplasmic reticulum-targeted protein. In Macaca fascicularis (Crab-eating macaque), this protein is Terminal nucleotidyltransferase 5C.